Consider the following 386-residue polypeptide: V-type proton ATPase subunit B 2 (386 aa).

It belongs to the ATPase alpha/beta chains family. As to quaternary structure, V-ATPase is a heteromultimeric enzyme composed of a peripheral catalytic V1 complex (main components: subunits A, B, C, D, E, and F) attached to an integral membrane V0 proton pore complex (main component: the proteolipid protein).

In terms of biological role, non-catalytic subunit of the peripheral V1 complex of vacuolar ATPase. V-ATPase is responsible for acidifying a variety of intracellular compartments in eukaryotic cells. This Gossypium hirsutum (Upland cotton) protein is V-type proton ATPase subunit B 2.